A 229-amino-acid polypeptide reads, in one-letter code: Cytochrome c oxidase subunit 2 (229 aa).

Over 1–26 (MSTWANLGLQDSASPLMEQLIFFHDH) the chain is Mitochondrial intermembrane. Residues 27–48 (ALLILVMITVLVGYLMFMLFFN) traverse the membrane as a helical segment. The Mitochondrial matrix portion of the chain corresponds to 49-62 (SYVNRFLLHGQLIE). A helical membrane pass occupies residues 63 to 82 (MIWTILPAIILLFIAMPSLR). Topologically, residues 83–229 (LLYLLDEINE…IKWISNSVNS (147 aa)) are mitochondrial intermembrane. 6 residues coordinate Cu cation: H161, C196, E198, C200, H204, and M207. E198 is a binding site for Mg(2+).

It belongs to the cytochrome c oxidase subunit 2 family. Component of the cytochrome c oxidase (complex IV, CIV), a multisubunit enzyme composed of a catalytic core of 3 subunits and several supernumerary subunits. The complex exists as a monomer or a dimer and forms supercomplexes (SCs) in the inner mitochondrial membrane with ubiquinol-cytochrome c oxidoreductase (cytochrome b-c1 complex, complex III, CIII). Cu cation serves as cofactor.

The protein localises to the mitochondrion inner membrane. It carries out the reaction 4 Fe(II)-[cytochrome c] + O2 + 8 H(+)(in) = 4 Fe(III)-[cytochrome c] + 2 H2O + 4 H(+)(out). Functionally, component of the cytochrome c oxidase, the last enzyme in the mitochondrial electron transport chain which drives oxidative phosphorylation. The respiratory chain contains 3 multisubunit complexes succinate dehydrogenase (complex II, CII), ubiquinol-cytochrome c oxidoreductase (cytochrome b-c1 complex, complex III, CIII) and cytochrome c oxidase (complex IV, CIV), that cooperate to transfer electrons derived from NADH and succinate to molecular oxygen, creating an electrochemical gradient over the inner membrane that drives transmembrane transport and the ATP synthase. Cytochrome c oxidase is the component of the respiratory chain that catalyzes the reduction of oxygen to water. Electrons originating from reduced cytochrome c in the intermembrane space (IMS) are transferred via the dinuclear copper A center (CU(A)) of subunit 2 and heme A of subunit 1 to the active site in subunit 1, a binuclear center (BNC) formed by heme A3 and copper B (CU(B)). The BNC reduces molecular oxygen to 2 water molecules using 4 electrons from cytochrome c in the IMS and 4 protons from the mitochondrial matrix. The protein is Cytochrome c oxidase subunit 2 (mt:CoII) of Drosophila affinis (Fruit fly).